Here is an 896-residue protein sequence, read N- to C-terminus: MEEVTLDKLATDVGTTVDRLVQQFAEAGMTKKAGDSVNEEEKQKLLAHLNRQHGGGGSSEPSKMTLKRKTKSTLSVGGGRDSKSVQVEVRKKRTYVKRSASEEQEREEQERLAQEKEAEEAKLREEEKQREEEQQRKEAEAKAKAEREKAEKEKAEKEKLRKEKEKERQKAEAEKRAAMTPEEREAADKAKADAEKLKRQQEEEARKKAEKEAEAQAEEARKLAEENAKRWEEEEQKRKQQEKEDVHFTTSSTAQEAEDAQDFDEERKSRKRGKKRRRKDEESDDTPRREKRRKGARRGSSLQQGFNKPAQPVERDVKIGETITVGELANRMAVKASDLIKTMMKMGEMVTINQILDQDTAALVVEELGHKPALVKDNALEEEVLSDRQEGGEEAPRAPVVTVMGHVDHGKTSLLDYIRKAKVASGEAGGITQHIGAYHVETGHGMVTFLDTPGHAAFTSMRARGAGATDVVILVVAADDGVMPQTKEAVQHAKAAGVPLVVAINKMDKEGADPDRVKNELSQLEVIPEDWGGDVQFIPLSAHTGEGIDELLEAILLQSEVLDLRAEKTGMASGIVVESRLDRGRGPVATVLVQRGLLKQGDVVLCGLEYGRIRAMRDETGKEIKEAGPSIPVEILGLSGVPQAGDEATVVRDERKAREVANYRQGKYRDVKLAKQQKAKLENMFADMAEGDVAELNIVLKSDVQGSLEAISDALTKLSTDEVKVNIIGSGVGGITETDISLASASNAIVVGFNVRAEAAARKLVEQESVDLRYYSVIYDLIDEVKAAMSGMLQPEFKQQIIGLAEVRDVFKSPKIGAIAGCMVTEGVVKRSAPIRVLRDNVVIYEGELESLRRFKDDVQEVRNGMECGIGVKNYNDVKEGDQIEVFETIQIERTL.

The disordered stretch occupies residues 46-315 (LAHLNRQHGG…FNKPAQPVER (270 aa)). Residues 99–247 (SASEEQEREE…RKQQEKEDVH (149 aa)) are compositionally biased toward basic and acidic residues. A compositionally biased stretch (basic residues) spans 269–278 (SRKRGKKRRR). Basic and acidic residues predominate over residues 279-288 (KDEESDDTPR). The tr-type G domain occupies 396 to 565 (PRAPVVTVMG…LLQSEVLDLR (170 aa)). Positions 405 to 412 (GHVDHGKT) are G1. 405–412 (GHVDHGKT) serves as a coordination point for GTP. Positions 430 to 434 (GITQH) are G2. Positions 451–454 (DTPG) are G3. GTP is bound by residues 451–455 (DTPGH) and 505–508 (NKMD). The tract at residues 505–508 (NKMD) is G4. The G5 stretch occupies residues 541-543 (SAH).

Belongs to the TRAFAC class translation factor GTPase superfamily. Classic translation factor GTPase family. IF-2 subfamily.

The protein resides in the cytoplasm. In terms of biological role, one of the essential components for the initiation of protein synthesis. Protects formylmethionyl-tRNA from spontaneous hydrolysis and promotes its binding to the 30S ribosomal subunits. Also involved in the hydrolysis of GTP during the formation of the 70S ribosomal complex. The polypeptide is Translation initiation factor IF-2 (Idiomarina loihiensis (strain ATCC BAA-735 / DSM 15497 / L2-TR)).